Here is a 194-residue protein sequence, read N- to C-terminus: Imidazoleglycerol-phosphate dehydratase (194 aa).

Belongs to the imidazoleglycerol-phosphate dehydratase family.

Its subcellular location is the cytoplasm. It carries out the reaction D-erythro-1-(imidazol-4-yl)glycerol 3-phosphate = 3-(imidazol-4-yl)-2-oxopropyl phosphate + H2O. Its pathway is amino-acid biosynthesis; L-histidine biosynthesis; L-histidine from 5-phospho-alpha-D-ribose 1-diphosphate: step 6/9. The polypeptide is Imidazoleglycerol-phosphate dehydratase (Sulfurisphaera tokodaii (strain DSM 16993 / JCM 10545 / NBRC 100140 / 7) (Sulfolobus tokodaii)).